The primary structure comprises 385 residues: tRNA (guanine-N(7)-)-methyltransferase non-catalytic subunit wuho (385 aa).

WD repeat units follow at residues K68–L108, G155–S194, and G198–H236.

The protein belongs to the WD repeat TRM82 family. In terms of assembly, forms a heterodimer with the catalytic subunit Mettl1. Interacts with mei-P26 and weakly interacts with bgcn; required for the function or formation of the mei-P26-bgcn-bam-sxl complex. Interacts with nanos; may be involved in mei-P26-dependent derepression of the BMP signaling pathway. Interacts with Myc; the interaction may be mediated by mei-P26 and may be involved in the regulation of ribosome biogenesis. In terms of tissue distribution, in testis, it is present at high level in hub cells, a niche for germline stem cells of testis. Ubiquitously expressed in all testicular cells throughout spermatogenesis. Ubiquitously expressed in all germline and somatic cells of the ovary.

Its subcellular location is the nucleus. The protein localises to the cytoplasm. It functions in the pathway tRNA modification; N(7)-methylguanine-tRNA biosynthesis. Functionally, required for the Mettl1-dependent formation of N(7)-methylguanine at position 46 (m7G46) in tRNA. In the Mettl1-wuho methyltransferase complex, it is required to stabilize and induce conformational changes of the catalytic subunit. Required for binding of nanos mRNA and repression of translation by the mei-P26-bgcn-bam-sxl complex. May cooperate with mei-P26 and nanos to derepress the BMP signaling pathway. May cooperate with mei-P26 to suppress expression of a subset of microRNAs. May cooperate with mei-P26 to regulate bam expression levels in germline cells during gametogenesis. Required to promote mitosis to meiosis transition during gametogenesis. May regulate germline cell division in part by regulating ribosome biogenesis. The sequence is that of tRNA (guanine-N(7)-)-methyltransferase non-catalytic subunit wuho from Drosophila grimshawi (Hawaiian fruit fly).